The primary structure comprises 331 residues: Cytosolic Fe-S cluster assembly factor CFD1 (331 aa).

25-32 lines the ATP pocket; that stretch reads GKGGVGKS. Positions 211 and 214 each coordinate [4Fe-4S] cluster.

The protein belongs to the Mrp/NBP35 ATP-binding proteins family. NUBP2/CFD1 subfamily. Heterotetramer of 2 NBP35 and 2 CFD1 chains. Requires [4Fe-4S] cluster as cofactor.

It is found in the cytoplasm. Its function is as follows. Component of the cytosolic iron-sulfur (Fe/S) protein assembly (CIA) machinery. Required for maturation of extramitochondrial Fe-S proteins. The NBP35-CFD1 heterotetramer forms a Fe-S scaffold complex, mediating the de novo assembly of an Fe-S cluster and its transfer to target apoproteins. This chain is Cytosolic Fe-S cluster assembly factor CFD1, found in Cryptococcus neoformans var. neoformans serotype D (strain B-3501A) (Filobasidiella neoformans).